We begin with the raw amino-acid sequence, 155 residues long: Antitoxin HicB 1 (155 aa).

The HTH cro/C1-type domain maps to 99–153; that stretch reads MLNAFLDSKLTQIELANRMGVKKQEVTRIFDLRHSTKIDTVGKVASAIGHQLTLS. A DNA-binding region (H-T-H motif) is located at residues 110–129; that stretch reads QIELANRMGVKKQEVTRIFD.

The protein belongs to the HicB antitoxin family. Probably forms a complex with the probable mRNA interferase HicA1 (its cognate toxin); when complexed with HicA 1 inhibits the toxin activity.

Functionally, antitoxin component of a type II toxin-antitoxin (TA) system. Functions as an mRNA interferase antitoxin preventing effects of the HicA 1 toxin. This Photorhabdus laumondii subsp. laumondii (strain DSM 15139 / CIP 105565 / TT01) (Photorhabdus luminescens subsp. laumondii) protein is Antitoxin HicB 1 (hicB1).